The chain runs to 237 residues: 5'-methylthioadenosine/S-adenosylhomocysteine nucleosidase (237 aa).

E12 serves as the catalytic Proton acceptor. Substrate contacts are provided by residues A78, I152, and 173–174 (ME). D197 acts as the Proton donor in catalysis.

Belongs to the PNP/UDP phosphorylase family. MtnN subfamily. As to quaternary structure, homodimer.

The enzyme catalyses S-adenosyl-L-homocysteine + H2O = S-(5-deoxy-D-ribos-5-yl)-L-homocysteine + adenine. It catalyses the reaction S-methyl-5'-thioadenosine + H2O = 5-(methylsulfanyl)-D-ribose + adenine. The catalysed reaction is 5'-deoxyadenosine + H2O = 5-deoxy-D-ribose + adenine. It functions in the pathway amino-acid biosynthesis; L-methionine biosynthesis via salvage pathway; S-methyl-5-thio-alpha-D-ribose 1-phosphate from S-methyl-5'-thioadenosine (hydrolase route): step 1/2. Catalyzes the irreversible cleavage of the glycosidic bond in both 5'-methylthioadenosine (MTA) and S-adenosylhomocysteine (SAH/AdoHcy) to adenine and the corresponding thioribose, 5'-methylthioribose and S-ribosylhomocysteine, respectively. Also cleaves 5'-deoxyadenosine, a toxic by-product of radical S-adenosylmethionine (SAM) enzymes, into 5-deoxyribose and adenine. Thus, is required for in vivo function of the radical SAM enzymes biotin synthase and lipoic acid synthase, that are inhibited by 5'-deoxyadenosine accumulation. The polypeptide is 5'-methylthioadenosine/S-adenosylhomocysteine nucleosidase (Hamiltonella defensa subsp. Acyrthosiphon pisum (strain 5AT)).